Reading from the N-terminus, the 395-residue chain is Methylmalonyl-CoA decarboxylase subunit beta (395 aa).

The next 9 helical transmembrane spans lie at 17-37 (LNMG…LAIA), 43-63 (LLLV…AGMM), 103-123 (GIFP…GPLI), 128-148 (SLLL…GAIA), 180-200 (PHLM…VPII), 230-250 (IIFP…AATL), 278-298 (INII…AEAF), 304-324 (LAIL…GVLL), and 374-394 (GPNV…LSLF).

It belongs to the GcdB/MmdB/OadB family. The methylmalonyl-CoA decarboxylase is composed of four subunits: the carboxyltransferase alpha subunit (MmdA), the tunnel beta subunit (MmdB), the biotin-containing gamma subunit (MmdC) and the delta subunit (MmdD). In terms of processing, the N-terminus is blocked.

Its subcellular location is the cell membrane. It catalyses the reaction (S)-methylmalonyl-CoA + Na(+)(in) + H(+)(out) = propanoyl-CoA + Na(+)(out) + CO2. In terms of biological role, tunnel subunit of the sodium ion pump methylmalonyl-CoA decarboxylase, which converts the chemical energy of a decarboxylation reaction into an electrochemical gradient of Na(+) ions across the cytoplasmic membrane, thereby creating a sodium ion motive force that is used for ATP synthesis. The beta subunit catalyzes the decarboxylation of the carboxybiotin carrier protein and the coupled export of Na(+) ions. The sequence is that of Methylmalonyl-CoA decarboxylase subunit beta from Propionigenium modestum.